Consider the following 545-residue polypeptide: Membrane protein insertase YidC (545 aa).

A run of 6 helical transmembrane segments spans residues 10–30 (AVYL…FLFS), 319–339 (LLYF…NVIP), 341–361 (WGLS…PLTF), 407–427 (IGGC…YGLV), 467–487 (ILPF…SNVS), and 502–522 (MPIM…IYWI).

The protein belongs to the OXA1/ALB3/YidC family. Type 1 subfamily. Interacts with the Sec translocase complex via SecD. Specifically interacts with transmembrane segments of nascent integral membrane proteins during membrane integration.

It is found in the cell inner membrane. Required for the insertion and/or proper folding and/or complex formation of integral membrane proteins into the membrane. Involved in integration of membrane proteins that insert both dependently and independently of the Sec translocase complex, as well as at least some lipoproteins. Aids folding of multispanning membrane proteins. This Borrelia recurrentis (strain A1) protein is Membrane protein insertase YidC.